The following is a 340-amino-acid chain: MNENLDPTTKGYNSEELDLEKRLRPLSFDDFAGQDQVLENLKVFVAAANQRGEALDHALFHGPPGLGKTTLANILANELEVGIKITSGPVLDKPGDLAGLLTNLDERDVLFIDEIHRLSPIVEEYLYSAMEDFKIDIMIESGPNARTVQINLNPFTLIGATTRSGLLTAPMRARFGISSRLQYYSTELLTTIVERSAGILKMPIDLEAAIEIAGRSRGTPRIANALLRRVRDFAQIKGNGTIDLEISKYALKALNVDAHGLDEMDNKILLTIINKFKGGPVGLSTLATAVSESSETIEEVYEPFLIQEGFIMRTPRGREVTEKAYKHLGKINTNIQGGLF.

Residues 1-184 (MNENLDPTTK…FGISSRLQYY (184 aa)) are large ATPase domain (RuvB-L). Residues Leu-23, Arg-24, Gly-65, Lys-68, Thr-69, Thr-70, 131–133 (EDF), Arg-174, Tyr-184, and Arg-221 each bind ATP. Thr-69 is a binding site for Mg(2+). The segment at 185 to 255 (STELLTTIVE…ISKYALKALN (71 aa)) is small ATPAse domain (RuvB-S). Residues 258–340 (AHGLDEMDNK…INTNIQGGLF (83 aa)) are head domain (RuvB-H). DNA is bound by residues Arg-313 and Arg-318.

Belongs to the RuvB family. Homohexamer. Forms an RuvA(8)-RuvB(12)-Holliday junction (HJ) complex. HJ DNA is sandwiched between 2 RuvA tetramers; dsDNA enters through RuvA and exits via RuvB. An RuvB hexamer assembles on each DNA strand where it exits the tetramer. Each RuvB hexamer is contacted by two RuvA subunits (via domain III) on 2 adjacent RuvB subunits; this complex drives branch migration. In the full resolvosome a probable DNA-RuvA(4)-RuvB(12)-RuvC(2) complex forms which resolves the HJ.

The protein localises to the cytoplasm. It catalyses the reaction ATP + H2O = ADP + phosphate + H(+). In terms of biological role, the RuvA-RuvB-RuvC complex processes Holliday junction (HJ) DNA during genetic recombination and DNA repair, while the RuvA-RuvB complex plays an important role in the rescue of blocked DNA replication forks via replication fork reversal (RFR). RuvA specifically binds to HJ cruciform DNA, conferring on it an open structure. The RuvB hexamer acts as an ATP-dependent pump, pulling dsDNA into and through the RuvAB complex. RuvB forms 2 homohexamers on either side of HJ DNA bound by 1 or 2 RuvA tetramers; 4 subunits per hexamer contact DNA at a time. Coordinated motions by a converter formed by DNA-disengaged RuvB subunits stimulates ATP hydrolysis and nucleotide exchange. Immobilization of the converter enables RuvB to convert the ATP-contained energy into a lever motion, pulling 2 nucleotides of DNA out of the RuvA tetramer per ATP hydrolyzed, thus driving DNA branch migration. The RuvB motors rotate together with the DNA substrate, which together with the progressing nucleotide cycle form the mechanistic basis for DNA recombination by continuous HJ branch migration. Branch migration allows RuvC to scan DNA until it finds its consensus sequence, where it cleaves and resolves cruciform DNA. In Flavobacterium johnsoniae (strain ATCC 17061 / DSM 2064 / JCM 8514 / BCRC 14874 / CCUG 350202 / NBRC 14942 / NCIMB 11054 / UW101) (Cytophaga johnsonae), this protein is Holliday junction branch migration complex subunit RuvB.